We begin with the raw amino-acid sequence, 258 residues long: MDELVIAGRSFSSRLMVGTGKFASNSLMADALAASGSQIVTVALRRVDIDRPEDDLLAHIDRDKYLLLPNTSGARDAEEAVRLARLARAAGCEPWVKLEVTPDPYYLLPDPIETLKAAEILVKEGFVVLPYINADPVLAKHLQEAGTATVMPLGAPIGTNKGVRTRDNIAIIIEQAIVPVVVDAGLGAPSHVAEAMEMGADAVLVNTALAVTPDPAGMAHAFRLGVEAGRRAFLAGLPAQQQKAEASSPLTGFLRDEQ.

Residue lysine 97 is the Schiff-base intermediate with DXP of the active site. 1-deoxy-D-xylulose 5-phosphate-binding positions include glycine 158, 184–185, and 206–207; these read AG and NT.

Belongs to the ThiG family. Homotetramer. Forms heterodimers with either ThiH or ThiS.

It localises to the cytoplasm. The catalysed reaction is [ThiS sulfur-carrier protein]-C-terminal-Gly-aminoethanethioate + 2-iminoacetate + 1-deoxy-D-xylulose 5-phosphate = [ThiS sulfur-carrier protein]-C-terminal Gly-Gly + 2-[(2R,5Z)-2-carboxy-4-methylthiazol-5(2H)-ylidene]ethyl phosphate + 2 H2O + H(+). It functions in the pathway cofactor biosynthesis; thiamine diphosphate biosynthesis. In terms of biological role, catalyzes the rearrangement of 1-deoxy-D-xylulose 5-phosphate (DXP) to produce the thiazole phosphate moiety of thiamine. Sulfur is provided by the thiocarboxylate moiety of the carrier protein ThiS. In vitro, sulfur can be provided by H(2)S. This chain is Thiazole synthase 2, found in Syntrophotalea carbinolica (strain DSM 2380 / NBRC 103641 / GraBd1) (Pelobacter carbinolicus).